The following is a 500-amino-acid chain: Beta-glucosidase 2 (500 aa).

Positions 1-24 (MGAAAAAGFFFVLLFLSVQGGAVG) are cleaved as a signal peptide. Q44 and H144 together coordinate a beta-D-glucoside. Residue E190 is the Proton donor of the active site. Residues C209 and C218 are joined by a disulfide bond. N-linked (GlcNAc...) asparagine glycosylation is present at N222. Residues Y334 and E403 each contribute to the a beta-D-glucoside site. The active-site Nucleophile is E403. The N-linked (GlcNAc...) asparagine glycan is linked to N410. A beta-D-glucoside is bound at residue W445.

Belongs to the glycosyl hydrolase 1 family.

The enzyme catalyses Hydrolysis of terminal, non-reducing beta-D-glucosyl residues with release of beta-D-glucose.. The polypeptide is Beta-glucosidase 2 (BGLU2) (Oryza sativa subsp. japonica (Rice)).